The primary structure comprises 667 residues: Probable potassium transport system protein Kup (667 aa).

12 helical membrane-spanning segments follow: residues 16–36, 58–78, 101–121, 146–166, 167–187, 221–241, 253–273, 294–314, 343–363, 373–393, 399–419, and 431–451; these read GFII…LYTM, VSLI…LIAL, WLII…ALTP, TNVI…QRFG, TGVI…VLGI, IFIL…YSDL, WPFV…WILA, VYLV…LISG, LYIP…VLYF, YGLA…YYLI, PLLA…FFLA, and VVVL…GTVI.

Belongs to the HAK/KUP transporter (TC 2.A.72) family.

It localises to the cell membrane. The catalysed reaction is K(+)(in) + H(+)(in) = K(+)(out) + H(+)(out). Transport of potassium into the cell. Likely operates as a K(+):H(+) symporter. The polypeptide is Probable potassium transport system protein Kup (Streptococcus equi subsp. zooepidemicus (strain H70)).